Reading from the N-terminus, the 77-residue chain is U8-lycotoxin-Ls1i (77 aa).

A signal peptide spans 1–20 (MKLIIFTGLVLFAIVSLIEV). A propeptide spanning residues 21–26 (QADNER) is cleaved from the precursor.

Belongs to the neurotoxin 19 (CSTX) family. 08 (U8-Lctx) subfamily. In terms of processing, contains 4 disulfide bonds. As to expression, expressed by the venom gland.

The protein resides in the secreted. This is U8-lycotoxin-Ls1i from Lycosa singoriensis (Wolf spider).